Consider the following 1163-residue polypeptide: Type IV pilus biogenesis factor PilY1 (1163 aa).

The first 30 residues, methionine 1–alanine 30, serve as a signal peptide directing secretion. The interval serine 329–tyrosine 352 is disordered. Residues aspartate 600, aspartate 602, asparagine 604, and aspartate 608 each contribute to the Ca(2+) site. The interval arginine 619–aspartate 621 is integrin-binding motif RGD. Ca(2+) is bound by residues aspartate 851, asparagine 853, aspartate 855, valine 857, and aspartate 859. Residues serine 1138–asparagine 1163 are disordered.

The protein belongs to the PilY1 family. Interacts (via C-terminal 532-1163) with host integrins alpha-V/beta-3 (ITGAV/ITGB3) and alpha-V/beta-5 (ITGAV/ITGB5).

Its subcellular location is the fimbrium. It localises to the membrane. The protein resides in the cytoplasm. The protein localises to the cytosol. Its function is as follows. Involved in pilus assembly, twitching motility and adhesion to host cells. Primes type IV pili (T4P) assembly and is required for inclusion of minor pilins PilV, PilW and PilX to the surface pili. Stabilizes assembled pilus fibers likely by antagonizing retraction mediated by PilT. Calcium-binding and calcium release by PilY1 seem to be essential for twitching motility and for regulation of pilus retraction dynamics of PilT. Adhesin for human tissue specifically recognizing a host receptor localized or enriched on basolateral epithelial cell surfaces. Binds host integrins in an calcium-dependent manner in vitro and this interaction may be employed by the bacterium to mediate host epithelial cell binding in vivo. The chain is Type IV pilus biogenesis factor PilY1 from Pseudomonas aeruginosa (strain PAK).